The sequence spans 68 residues: Large ribosomal subunit protein uL29 (68 aa).

This sequence belongs to the universal ribosomal protein uL29 family.

This is Large ribosomal subunit protein uL29 from Rhodopseudomonas palustris (strain BisA53).